The following is a 96-amino-acid chain: Small ribosomal subunit protein bS6 (96 aa).

It belongs to the bacterial ribosomal protein bS6 family.

Functionally, binds together with bS18 to 16S ribosomal RNA. This is Small ribosomal subunit protein bS6 (rpsF) from Mycobacterium bovis (strain ATCC BAA-935 / AF2122/97).